The primary structure comprises 603 residues: Linalool synthase Tps-5031L19, chloroplastic (603 aa).

The N-terminal 36 residues, 1–36 (MSSMRTYVAIMKKPSVEHVDNVDKKASKPSWRVSLS), are a transit peptide targeting the chloroplast. The (2E)-geranyl diphosphate site is built by R322, D359, D363, R500, and D503. D359 and D363 together coordinate Mg(2+). The short motif at 359–363 (DDVYD) is the DDXXD motif element. 3 residues coordinate Mg(2+): D503, T507, and E511.

The protein belongs to the terpene synthase family. Tpsb subfamily. As to quaternary structure, monomer. The cofactor is Mg(2+). It depends on Mn(2+) as a cofactor.

Its subcellular location is the plastid. It localises to the chloroplast. The enzyme catalyses (2E)-geranyl diphosphate + H2O = linalool + diphosphate. Its pathway is secondary metabolite biosynthesis; terpenoid biosynthesis. Its function is as follows. Monoterpene synthase (mono-TPS) involved in the biosynthesis of monoterpenes natural products. Catalyzes the conversion of (2E)-geranyl diphosphate (GPP) into linalool. The sequence is that of Linalool synthase Tps-5031L19, chloroplastic from Perilla frutescens var. hirtella (Perilla citriodora).